Reading from the N-terminus, the 345-residue chain is Dihydroorotase (345 aa).

2 residues coordinate Zn(2+): H13 and H15. Substrate-binding positions include 15-17 (HLR) and N41. K99, H136, and H174 together coordinate Zn(2+). K99 carries the N6-carboxylysine modification. H136 provides a ligand contact to substrate. Residue L219 coordinates substrate. D247 serves as a coordination point for Zn(2+). The active site involves D247. Substrate-binding residues include H251 and A263.

Belongs to the metallo-dependent hydrolases superfamily. DHOase family. Class II DHOase subfamily. In terms of assembly, homodimer. Zn(2+) serves as cofactor.

The enzyme catalyses (S)-dihydroorotate + H2O = N-carbamoyl-L-aspartate + H(+). It functions in the pathway pyrimidine metabolism; UMP biosynthesis via de novo pathway; (S)-dihydroorotate from bicarbonate: step 3/3. Catalyzes the reversible cyclization of carbamoyl aspartate to dihydroorotate. In Agrobacterium fabrum (strain C58 / ATCC 33970) (Agrobacterium tumefaciens (strain C58)), this protein is Dihydroorotase.